A 1330-amino-acid chain; its full sequence is Kinectin (1330 aa).

The Cytoplasmic segment spans residues 1–6 (MEFYES). A helical; Signal-anchor for type II membrane protein membrane pass occupies residues 7 to 29 (TYFIVLIPSVVITVIFLFFWLFM). The Lumenal segment spans residues 30 to 1330 (KETLYDEVLA…KEKEHYQVLE (1301 aa)). Disordered stretches follow at residues 49-81 (PTKT…ESVP) and 108-218 (SSSV…KQKA). S75 and S77 each carry phosphoserine. The segment covering 113–122 (ERKKKEKKHK) has biased composition (basic residues). Residues 123–135 (PVLEEQVTKESDV) are compositionally biased toward basic and acidic residues. Position 153 is a phosphothreonine (T153). S156 carries the post-translational modification Phosphoserine. Residues 161-171 (SKKKPGQKKSK) show a composition bias toward basic residues. N-linked (GlcNAc...) asparagine glycosylation is found at N172, N435, N772, N904, and N1055. Over residues 172-182 (NGSDDQDKKVE) the composition is skewed to basic and acidic residues. Residues 332-1329 (HQLQEKDKLL…TKEKEHYQVL (998 aa)) adopt a coiled-coil conformation. The residue at position 1085 (S1085) is a Phosphoserine. N1236 is a glycosylation site (N-linked (GlcNAc...) asparagine). The residue at position 1286 (S1286) is a Phosphoserine. The N-linked (GlcNAc...) asparagine glycan is linked to N1302.

It belongs to the kinectin family. In terms of assembly, parallel homodimers formed between the membrane-bound and the cytosolic form, and also between 2 cytosolic forms. In terms of tissue distribution, expressed in male brain, heart, kidney, liver, lung, spleen and testis.

It localises to the endoplasmic reticulum membrane. Its function is as follows. Receptor for kinesin thus involved in kinesin-driven vesicle motility. The protein is Kinectin (KTN1) of Vulpes vulpes (Red fox).